A 64-amino-acid chain; its full sequence is Copper-specific metallothionein-2 (64 aa).

The Cu(+) site is built by Cys-3, Cys-5, Cys-9, Cys-11, Cys-16, Cys-18, Cys-22, Cys-24, Cys-27, Cys-33, Cys-40, Cys-44, Cys-50, Cys-52, Cys-56, and Cys-58.

This sequence belongs to the metallothionein superfamily. Type 2 family.

Functionally, the metallothioneins are involved in the cellular sequestration of toxic metal ions and regulation of essential trace elements. This isoform binds exclusively copper. This is Copper-specific metallothionein-2 from Callinectes sapidus (Blue crab).